Reading from the N-terminus, the 578-residue chain is 65-kDa microtubule-associated protein 2 (578 aa).

Coiled-coil stretches lie at residues 64–84, 151–184, 235–257, 290–312, and 461–489; these read AELL…TTAL, DETD…VLEF, TLKE…LTDL, ALAL…LKSS, and AMLD…QQEQ. The span at 473 to 494 shows a compositional bias: basic and acidic residues; it reads REDEKRRLKEQKKQQEQPHTDQ. The interval 473–578 is disordered; it reads REDEKRRLKE…SRADPVMASP (106 aa). Phosphoserine is present on residues S503 and S532. Residues 549-558 are compositionally biased toward polar residues; sequence KIASPSNIVA. 3 positions are modified to phosphoserine: S566, S569, and S577.

The protein belongs to the MAP65/ASE1 family. In terms of assembly, forms a dimer. Binds to microtubules (MT). Bundles polymerized MT via the formation of 25-nm crossbridges with centrally located endocytic MT.

It localises to the nucleus. The protein localises to the cytoplasm. Its subcellular location is the cytoskeleton. It is found in the spindle pole. The protein resides in the phragmoplast. Microtubule-associated protein that stabilize microtubules (MT). Involved in the regulation of MT organization and dynamics. Confers MT resistance to the drug propyzamide and cold conditions. This is 65-kDa microtubule-associated protein 2 (MAP65-2) from Arabidopsis thaliana (Mouse-ear cress).